A 2718-amino-acid polypeptide reads, in one-letter code: E3 SUMO-protein ligase RanBP2 (2718 aa).

Positions 1 to 100 (MFTTRKEVDA…DPRQSEVVID (100 aa)) are sufficient for interaction with Hsp83. A sufficient for interaction with piwi region spans residues 1 to 200 (MFTTRKEVDA…EKMKIDQAFN (200 aa)). 2 TPR repeats span residues 26–58 (DIKGLAVARLYMKVQEYPKAIEYLNGYLRVRDD) and 59–94 (AVGHNMIATCYSRLNPPDVTEALQHYQRSIQIDPRQ). Disordered stretches follow at residues 796 to 816 (QQDRNSRGIDNSFGSPDVHNN) and 937 to 959 (EHQQQQQHQQQQSHNQGAIHPVV). Residues 803–816 (GIDNSFGSPDVHNN) are compositionally biased toward polar residues. Repeat 1 spans residues 808–809 (FG). Residues 808 to 2581 (FGSPDVHNNS…GEENETKLFG (1774 aa)) are 27 X 2 AA repeats of F-G. Residues 938-948 (HQQQQQHQQQQ) are compositionally biased toward low complexity. Repeat copies occupy residues 1028 to 1029 (FG), 1035 to 1036 (FG), and 1104 to 1105 (FG). A disordered region spans residues 1181-1208 (QPVEKEPPANVVITSSDPLPKPTTASVQ). The segment covering 1192–1208 (VITSSDPLPKPTTASVQ) has biased composition (polar residues). Repeat 5 spans residues 1252 to 1253 (FG). Disordered stretches follow at residues 1263–1314 (FKTQ…KPII) and 1483–1502 (NKPQEQTKTQPNPDPPATAA). The span at 1284–1299 (NQSGATDPNKTLPQDT) shows a compositional bias: polar residues. Residues 1309–1445 (DFKPIIPLPD…FTKASEAAKS (137 aa)) form the RanBD1 1 domain. Residues 1483–1493 (NKPQEQTKTQP) are compositionally biased toward polar residues. Repeat copies occupy residues 1506 to 1507 (FG), 1539 to 1540 (FG), 1547 to 1548 (FG), and 1552 to 1553 (FG). Residues 1605–1742 (QFVPVIALPD…VQKAQQSIGN (138 aa)) enclose the RanBD1 2 domain. Residues 1738 to 1761 (QSIGNEPKKEEVPSAAGEKEKPIK) form a disordered region. Basic and acidic residues predominate over residues 1743 to 1760 (EPKKEEVPSAAGEKEKPI). Residues 1763 to 1764 (FG) form repeat 10. The RanBP2-type 1 zinc finger occupies 1770–1799 (KAGSWNCQACYTNNGQDQLYCLACQEPKDA). Repeat copies occupy residues 1826–1827 (FG), 1842–1843 (FG), 1874–1875 (FG), and 1883–1884 (FG). Residues 1890 to 1919 (AVGSWSCSACYVNNPGESLYCSACDAPKND) form a RanBP2-type 2 zinc finger. 2 tandem repeats follow at residues 1942-1943 (FG) and 1944-1945 (FG). Disordered stretches follow at residues 1981-2021 (FTFS…TYFS), 2154-2204 (EDSP…THEV), and 2239-2273 (SLSRNNSSASEASKTPSSAFIFGSTDKSEPGKDAG). The segment covering 2002-2016 (EDEDNDSQEVEEEEN) has biased composition (acidic residues). The 133-residue stretch at 2019-2151 (YFSPVIPLPD…IKNALNETAK (133 aa)) folds into the RanBD1 3 domain. A compositionally biased stretch (polar residues) spans 2161–2175 (SVSQSTEANKPSQKN). The span at 2239–2257 (SLSRNNSSASEASKTPSSA) shows a compositional bias: low complexity. 11 consecutive repeat copies span residues 2260-2261 (FG), 2313-2314 (FG), 2332-2333 (FG), 2352-2353 (FG), 2360-2361 (FG), 2366-2367 (FG), 2393-2394 (FG), 2399-2400 (FG), 2415-2416 (FG), 2421-2422 (FG), and 2580-2581 (FG). Residues 2320–2346 (AEQQKKDSSESVFGGNKADSQSPATQE) form a disordered region. Positions 2556–2699 (HYDAIVELPD…VNSCIKRAKA (144 aa)) constitute a RanBD1 4 domain.

It belongs to the RanBP2 E3 ligase family. As to quaternary structure, part of the nuclear pore complex. Forms a complex with Nxt1, sbr/Nxf1 and RanGAP. Interacts (via TPR repeats) with Hsp83; the interaction is required for the nuclear import of the sesquiterpenoid juvenile hormone receptor Met. Interacts (via N-terminus) with piwi. Expressed in both oocytes and nurse cells (at protein level).

It is found in the nucleus. It localises to the nuclear pore complex. Its function is as follows. E3 SUMO-protein ligase. Component of the nuclear pore complex (NPC), a complex required for trafficking across the nuclear envelope. Required for nuclear import of nuclear localization signal (NLS)-containing proteins in an importin alpha/importin beta-dependent manner, but also for the nuclear import of specific proteins such as phosphorylated Mad or the sesquiterpenoid juvenile hormone receptor Met as part of the juvenile hormone signal transduction pathway. Plays a role in nuclear mRNA export by recruiting the mRNA transport complex composed of Nxt1 and sbr/Nxf1 to the NPC. Essential during germline development for transposon silencing and piRNA biogenesis probably by regulating piwi localization to the nucleus. During oogenesis, required to form granules that modulate the biogenesis of annulate lamellae containing nuclear pore complex components. This is E3 SUMO-protein ligase RanBP2 from Drosophila melanogaster (Fruit fly).